The sequence spans 443 residues: Multidrug resistance protein MdtA (443 aa).

A signal peptide spans 1-24 (MKAQSKRTSRLLILLGIAVAIIVA). Residues 36–46 (DGSTGAQQHAV) are compositionally biased toward polar residues. Disordered stretches follow at residues 36–57 (DGST…GGRR) and 398–443 (TPRS…AEKS). Residues 409–419 (AAEKPATAEKA) show a composition bias toward basic and acidic residues. The span at 427-443 (SATGASAGSTTTAAEKS) shows a compositional bias: low complexity.

Belongs to the membrane fusion protein (MFP) (TC 8.A.1) family. In terms of assembly, part of a tripartite efflux system composed of MdtA, MdtB and MdtC.

It localises to the cell inner membrane. This chain is Multidrug resistance protein MdtA, found in Yersinia enterocolitica serotype O:8 / biotype 1B (strain NCTC 13174 / 8081).